The sequence spans 171 residues: uncharacterized protein (171 aa).

The N-terminal stretch at 1–20 (MRRVLFSCFCGLLWSSSGWA) is a signal peptide. Residues Cys-40 and Cys-80 are joined by a disulfide bond.

Belongs to the fimbrial protein family.

Its subcellular location is the fimbrium. Functionally, part of the sfmACDHF fimbrial operon. Could contribute to adhesion to various surfaces in specific environmental niches. Increases adhesion to eukaryotic T24 bladder epithelial cells in the absence of fim genes. This is an uncharacterized protein from Escherichia coli (strain K12).